Here is a 291-residue protein sequence, read N- to C-terminus: Peptide methionine sulfoxide reductase MsrB/MsrA (291 aa).

The MsrB domain occupies 1-124; it reads MLANLQHLSD…NSAALRFVAR (124 aa). The active-site Nucleophile is the C113. The segment at 127-284 is peptide methionine sulfoxide reductase A; sequence GTALFAAGCF…PGGYCHVSLH (158 aa). C135 is a catalytic residue.

In the N-terminal section; belongs to the MsrB Met sulfoxide reductase family. This sequence in the C-terminal section; belongs to the MsrA Met sulfoxide reductase family.

It catalyses the reaction L-methionyl-[protein] + [thioredoxin]-disulfide + H2O = L-methionyl-(R)-S-oxide-[protein] + [thioredoxin]-dithiol. The enzyme catalyses L-methionyl-[protein] + [thioredoxin]-disulfide + H2O = L-methionyl-(S)-S-oxide-[protein] + [thioredoxin]-dithiol. The catalysed reaction is [thioredoxin]-disulfide + L-methionine + H2O = L-methionine (S)-S-oxide + [thioredoxin]-dithiol. Has an important function as a repair enzyme for proteins that have been inactivated by oxidation. Catalyzes the reversible oxidation-reduction of methionine sulfoxide in proteins to methionine. The protein is Peptide methionine sulfoxide reductase MsrB/MsrA (msrAB) of Treponema pallidum (strain Nichols).